The following is a 744-amino-acid chain: Tripartite motif-containing protein 2 (744 aa).

Ser10 carries the post-translational modification Phosphoserine. The RING-type zinc finger occupies 23-64; that stretch reads CSICLERYKNPKVLPCLHTFCERCLQNYIPAHSLTLSCPVCR. The B box-type zinc-finger motif lies at 113 to 154; the sequence is GKPLSCPNHDGNVMEFYCQSCETAMCRECTEGEHAEHPTVPL. 4 residues coordinate Zn(2+): Cys118, His121, Cys141, and His146. The Filamin repeat unit spans residues 320–421; that stretch reads TTNAVASETV…IRGSPFKLKV (102 aa). Thr371 carries the phosphothreonine modification. Ser375, Ser424, and Ser428 each carry phosphoserine. The tract at residues 432-462 is disordered; that stretch reads EGVKRRVKSPGSGHVKQKAVKRPASMYSTGK. NHL repeat units lie at residues 473–516, 520–563, 564–605, 609–652, 656–699, and 700–743; these read IFRV…FSND, KSRF…FSND, GKFK…FQPN, VTRF…FNQE, MLKF…FDGS, and GSFL…YRYL.

This sequence belongs to the TRIM/RBCC family. Forms homooligomers. Interacts with TRIM3; this interaction reduces TRIM2 activity. Interacts with myosin V; myosin V may not be a substrate for ubiquitination. Interacts with NEFL. Interacts with phosphorylated BCL2L11. Interacts with SIRPA. Post-translationally, RING-type zinc finger-dependent and UBE2D1-dependent autoubiquitination.

The enzyme catalyses S-ubiquitinyl-[E2 ubiquitin-conjugating enzyme]-L-cysteine + [acceptor protein]-L-lysine = [E2 ubiquitin-conjugating enzyme]-L-cysteine + N(6)-ubiquitinyl-[acceptor protein]-L-lysine.. The protein operates within protein modification; protein ubiquitination. UBE2D1-dependent E3 ubiquitin-protein ligase that mediates the ubiquitination of NEFL and of phosphorylated BCL2L11. Plays a neuroprotective function. May play a role in neuronal rapid ischemic tolerance. Plays a role in antiviral immunity and limits New World arenavirus infection independently of its ubiquitin ligase activity. In Rattus norvegicus (Rat), this protein is Tripartite motif-containing protein 2 (Trim2).